The sequence spans 526 residues: Peptide chain release factor 3 (526 aa).

The 269-residue stretch at 9–277 (DKRRTFAIIS…GIVEWAPKPL (269 aa)) folds into the tr-type G domain. GTP contacts are provided by residues 18–25 (SHPDAGKT), 86–90 (DTPGH), and 140–143 (NKLD).

Belongs to the TRAFAC class translation factor GTPase superfamily. Classic translation factor GTPase family. PrfC subfamily.

The protein localises to the cytoplasm. Functionally, increases the formation of ribosomal termination complexes and stimulates activities of RF-1 and RF-2. It binds guanine nucleotides and has strong preference for UGA stop codons. It may interact directly with the ribosome. The stimulation of RF-1 and RF-2 is significantly reduced by GTP and GDP, but not by GMP. The chain is Peptide chain release factor 3 from Shewanella sp. (strain MR-4).